The primary structure comprises 570 residues: Putative periplasmic trehalase (570 aa).

The N-terminal stretch at 1–34 (MIPPEIRRSVLLQKAIKLALAGTLLTFASFSATA) is a signal peptide. Substrate-binding positions include arginine 159, 166–167 (WD), asparagine 203, 212–214 (RSQ), 284–286 (RPE), and glycine 317. Catalysis depends on proton donor/acceptor residues aspartate 319 and glutamate 503. Glutamate 518 contacts substrate. Residues 544-570 (KPCDSVPSTRPASLSATPTKTPSAATQ) are disordered. A compositionally biased stretch (low complexity) spans 554–570 (PASLSATPTKTPSAATQ).

This sequence belongs to the glycosyl hydrolase 37 family. In terms of assembly, monomer.

The protein resides in the periplasm. The catalysed reaction is alpha,alpha-trehalose + H2O = alpha-D-glucose + beta-D-glucose. In terms of biological role, provides the cells with the ability to utilize trehalose at high osmolarity by splitting it into glucose molecules that can subsequently be taken up by the phosphotransferase-mediated uptake system. The chain is Putative periplasmic trehalase from Salmonella typhi.